The sequence spans 976 residues: Ubiquitin ligase-binding protein BUL1 (976 aa).

The segment at 1 to 65 is disordered; it reads MAKDLNDSGF…SPSLHSPKSW (65 aa). Polar residues predominate over residues 23-39; it reads SDFTANSSTTMNVNANT. Residues 53-64 are compositionally biased toward low complexity; that stretch reads SSRSPSLHSPKS. Residues Ser58 and Ser70 each carry the phosphoserine modification. Disordered stretches follow at residues 82–124, 145–196, and 857–878; these read LAHS…DGDI, PQGN…SSST, and SEDS…ASLT. The PY-motif signature appears at 156 to 160; that stretch reads FPPSY. Residues 163 to 176 are compositionally biased toward low complexity; sequence ANNSTATGAAGSSA. A compositionally biased stretch (polar residues) spans 177-196; it reads DLSHQSLSTDALGATRSSST. Residues 862 to 878 show a composition bias toward low complexity; sequence SHTGNGSSSSPSSASLT.

The protein belongs to the BUL1 family. As to quaternary structure, component of the RSP5-BUL1/2 ubiquitin ligase complex composed of at least RSP5 and BUL1 or BUL2.

The protein resides in the cytoplasm. It participates in protein modification; protein ubiquitination. Its function is as follows. Component of a RSP5 ubiquitin ligase complex which specifies polyubiquitination and intracellular trafficking of the general amino acid permease GAP1 as well as other permeases such as PMA1. The RSP5-BUL1/2 complex is also necessary for the heat-shock element (HSE)-mediated gene expression, nitrogen starvation GLN3-dependent transcription and pressure-induced differential regulation of the 2 tryptophan permeases TAT1 and TAT2. The polypeptide is Ubiquitin ligase-binding protein BUL1 (BUL1) (Saccharomyces cerevisiae (strain ATCC 204508 / S288c) (Baker's yeast)).